We begin with the raw amino-acid sequence, 241 residues long: Thymidylate kinase (241 aa).

17-24 (GGEGAGKT) is an ATP binding site.

The protein belongs to the thymidylate kinase family.

It catalyses the reaction dTMP + ATP = dTDP + ADP. Its function is as follows. Phosphorylation of dTMP to form dTDP in both de novo and salvage pathways of dTTP synthesis. The sequence is that of Thymidylate kinase from Thermosynechococcus vestitus (strain NIES-2133 / IAM M-273 / BP-1).